The chain runs to 403 residues: Acetyl-CoA acetyltransferase IB (403 aa).

Cys-91 (acyl-thioester intermediate) is an active-site residue. Catalysis depends on proton acceptor residues His-353 and Cys-383. A Microbody targeting signal motif is present at residues 401-403; the sequence is AKL.

This sequence belongs to the thiolase-like superfamily. Thiolase family. In terms of assembly, multimeric.

The protein resides in the peroxisome. It catalyses the reaction 2 acetyl-CoA = acetoacetyl-CoA + CoA. Its pathway is metabolic intermediate biosynthesis; (R)-mevalonate biosynthesis; (R)-mevalonate from acetyl-CoA: step 1/3. The protein is Acetyl-CoA acetyltransferase IB (PACTB) of Candida tropicalis (Yeast).